Reading from the N-terminus, the 332-residue chain is MSVKEHLIHNVHKEEHGHAHNKITVVGVGAVGMACAISILMKDLADELALVDVVEDKLRGEMLDLQHGSLFLRTPKIVSGKDYSVTANSKLVIITAGARQQEGESRLNLVQRNVNIFKFIIPNVVKHSPDCKLLVVSNPVDILTYVAWKISGFPKHRVIGSGCNLDSARFRYLMGERLGIHPLSCHGWIVGEHGDSSVPVWSGVNVAGVSLKALHPELGTDADKEHWKEVHKEVVDSAYEVIKLKGYTSWAIGLSVADLAETVMKNLRRVHPISTMVKGMYGIKDDVFLSVPCVLGYHGITDVVMMTLKSEEEEKIRKSADTLWGIQKELQF.

NAD(+) is bound by residues 29–57 (GAVGMACAISILMKDLADELALVDVVEDK) and arginine 99. Substrate is bound by residues arginine 106, asparagine 138, and arginine 169. Residue asparagine 138 participates in NAD(+) binding. Histidine 193 functions as the Proton acceptor in the catalytic mechanism. Threonine 248 contributes to the substrate binding site.

Belongs to the LDH/MDH superfamily. LDH family. Homotetramer.

It localises to the cytoplasm. The enzyme catalyses (S)-lactate + NAD(+) = pyruvate + NADH + H(+). The protein operates within fermentation; pyruvate fermentation to lactate; (S)-lactate from pyruvate: step 1/1. Functionally, interconverts simultaneously and stereospecifically pyruvate and lactate with concomitant interconversion of NADH and NAD(+). This is L-lactate dehydrogenase A chain (LDHA) from Caiman crocodilus apaporiensis (Rio Apaporis caiman).